The sequence spans 250 residues: Imidazole glycerol phosphate synthase subunit HisF (250 aa).

Active-site residues include aspartate 11 and aspartate 130.

This sequence belongs to the HisA/HisF family. As to quaternary structure, heterodimer of HisH and HisF.

The protein resides in the cytoplasm. It carries out the reaction 5-[(5-phospho-1-deoxy-D-ribulos-1-ylimino)methylamino]-1-(5-phospho-beta-D-ribosyl)imidazole-4-carboxamide + L-glutamine = D-erythro-1-(imidazol-4-yl)glycerol 3-phosphate + 5-amino-1-(5-phospho-beta-D-ribosyl)imidazole-4-carboxamide + L-glutamate + H(+). Its pathway is amino-acid biosynthesis; L-histidine biosynthesis; L-histidine from 5-phospho-alpha-D-ribose 1-diphosphate: step 5/9. Its function is as follows. IGPS catalyzes the conversion of PRFAR and glutamine to IGP, AICAR and glutamate. The HisF subunit catalyzes the cyclization activity that produces IGP and AICAR from PRFAR using the ammonia provided by the HisH subunit. The chain is Imidazole glycerol phosphate synthase subunit HisF from Bacteroides fragilis (strain ATCC 25285 / DSM 2151 / CCUG 4856 / JCM 11019 / LMG 10263 / NCTC 9343 / Onslow / VPI 2553 / EN-2).